We begin with the raw amino-acid sequence, 155 residues long: Prespore-specific protein E (155 aa).

An N-terminal signal peptide occupies residues 1 to 20 (MRFISIFLIIVALCVSSSWA). N-linked (GlcNAc...) asparagine glycans are attached at residues Asn22, Asn82, Asn85, and Asn102. Ser105 is a glycosylation site (O-linked (GlcNAc) serine). The GPI-like-anchor amidated asparagine moiety is linked to residue Asn133. Positions 134–155 (SADKVAVGIAIIFGALISLLAL) are cleaved as a propeptide — removed in mature form.

Post-translationally, the GPI-like-anchor contains a phosphoceramide group, rather than a phosphatidyl group.

The protein localises to the cell membrane. The sequence is that of Prespore-specific protein E (pspE) from Dictyostelium discoideum (Social amoeba).